Consider the following 217-residue polypeptide: Cytochrome c biogenesis ATP-binding export protein CcmA (217 aa).

The ABC transporter domain occupies 6 to 216 (LQLEQLACQR…QYKFFDQGNM (211 aa)). Position 38–45 (38–45 (GHNGIGKT)) interacts with ATP.

Belongs to the ABC transporter superfamily. CcmA exporter (TC 3.A.1.107) family. The complex is composed of two ATP-binding proteins (CcmA) and two transmembrane proteins (CcmB).

Its subcellular location is the cell inner membrane. The catalysed reaction is heme b(in) + ATP + H2O = heme b(out) + ADP + phosphate + H(+). Part of the ABC transporter complex CcmAB involved in the biogenesis of c-type cytochromes; once thought to export heme, this seems not to be the case, but its exact role is uncertain. Responsible for energy coupling to the transport system. The protein is Cytochrome c biogenesis ATP-binding export protein CcmA of Histophilus somni (strain 129Pt) (Haemophilus somnus).